A 433-amino-acid chain; its full sequence is Xylose isomerase (433 aa).

Catalysis depends on residues His-99 and Asp-102. Mg(2+) contacts are provided by Glu-230, Glu-266, His-269, Asp-294, Asp-305, Asp-307, and Asp-337.

This sequence belongs to the xylose isomerase family. Homotetramer. It depends on Mg(2+) as a cofactor.

The protein localises to the cytoplasm. It catalyses the reaction alpha-D-xylose = alpha-D-xylulofuranose. In Roseobacter denitrificans (strain ATCC 33942 / OCh 114) (Erythrobacter sp. (strain OCh 114)), this protein is Xylose isomerase.